Here is a 2149-residue protein sequence, read N- to C-terminus: Non-reducing polyketide synthase PvBS090_009107 (2149 aa).

The interval 8–244 (YLFGDQTGEF…VRVPVHAPYH (237 aa)) is N-terminal acylcarrier protein transacylase domain (SAT). The region spanning 375–806 (QSKIAIIGLS…GGNTALLIED (432 aa)) is the Ketosynthase family 3 (KS3) domain. Active-site for beta-ketoacyl synthase activity residues include Cys547, His682, and His724. The segment at 911 to 1231 (FVFTGQGAQY…LSAIYLAGVD (321 aa)) is malonyl-CoA:ACP transacylase (MAT) domain. Ser1000 acts as the For acyl/malonyl transferase activity in catalysis. The interval 1290–1604 (TTSVQRIVET…RQVLNTVLPP (315 aa)) is product template (PT) domain. Residues 1294–1426 (QRIVETRDEG…CLVKFSDTHL (133 aa)) form an N-terminal hotdog fold region. Residues 1294-1599 (QRIVETRDEG…FQGVPRQVLN (306 aa)) enclose the PKS/mFAS DH domain. Residue His1326 is the Proton acceptor; for dehydratase activity of the active site. The tract at residues 1454 to 1599 (SHRMHRGMFY…FQGVPRQVLN (146 aa)) is C-terminal hotdog fold. The active-site Proton donor; for dehydratase activity is the Asp1512. The disordered stretch occupies residues 1604-1631 (PAGGSKAAPRTTARAVPPPPINVEKPKS). The Carrier 1 domain maps to 1649–1726 (SAGPSVLVQA…DLKQLLSQAS (78 aa)). Ser1686 is modified (O-(pantetheine 4'-phosphoryl)serine). Composition is skewed to low complexity over residues 1722–1731 (LSQASPSDSS) and 1744–1755 (SSSTEPSTPGTP). A disordered region spans residues 1722 to 1763 (LSQASPSDSSDSSEESHYSFRDSSSTEPSTPGTPAFFSPKRG). Positions 1769-1846 (VGESETIKTI…AVETALDLKP (78 aa)) constitute a Carrier 2 domain. Ser1806 is modified (O-(pantetheine 4'-phosphoryl)serine). Residues 1875-2147 (STHPPATSIL…KLSAFIGRAM (273 aa)) are thioesterase (TE) domain. Ser1965 functions as the For thioesterase activity in the catalytic mechanism.

It catalyses the reaction 6 malonyl-CoA + acetyl-CoA + 6 H(+) = naphtopyrone YWA1 + 6 CO2 + 7 CoA + H2O. Its pathway is secondary metabolite biosynthesis. The protein operates within pigment biosynthesis. In terms of biological role, non-reducing polyketide synthase; part of the gene cluster 24 that mediates the biosynthesis of a pigment with an aromatic structure protecting the pigmented fungus from both ionizing and non-ionizing radiations based on a mechanism similar to melanin, that is, free radical quenching and spherical spatial arrangement. Catalyzes the biosynthesis of the gamma-naphthopyrone precursor YWA1, via condensation of one acetyl-CoA starter unit with 6 malonyl-CoA units. YWA1 is probably further processed by the additional enzymes present within the cluster 24, however these additional steps have not been characterized yet. YWA1 is not converted to DHN-melanin in Byssochlamys spectabilis since the use of the DHN-melanin pathway inhibitor pyroquilon does not result in a loss of pigmentation. This is Non-reducing polyketide synthase PvBS090_009107 from Byssochlamys spectabilis (Paecilomyces variotii).